The primary structure comprises 430 residues: 3-phosphoshikimate 1-carboxyvinyltransferase (430 aa).

3-phosphoshikimate contacts are provided by Lys21, Ser22, and Arg26. Position 21 (Lys21) interacts with phosphoenolpyruvate. Phosphoenolpyruvate is bound by residues Gly92 and Arg120. 3-phosphoshikimate-binding residues include Ser165, Ser166, Gln167, Ser193, Asp314, and Lys341. Gln167 contributes to the phosphoenolpyruvate binding site. Asp314 serves as the catalytic Proton acceptor. Positions 345, 386, and 411 each coordinate phosphoenolpyruvate.

Belongs to the EPSP synthase family. In terms of assembly, monomer.

The protein resides in the cytoplasm. The catalysed reaction is 3-phosphoshikimate + phosphoenolpyruvate = 5-O-(1-carboxyvinyl)-3-phosphoshikimate + phosphate. It participates in metabolic intermediate biosynthesis; chorismate biosynthesis. Its function is as follows. Catalyzes the transfer of the enolpyruvyl moiety of phosphoenolpyruvate (PEP) to the 5-hydroxyl of shikimate-3-phosphate (S3P) to produce enolpyruvyl shikimate-3-phosphate and inorganic phosphate. The polypeptide is 3-phosphoshikimate 1-carboxyvinyltransferase (Methanospirillum hungatei JF-1 (strain ATCC 27890 / DSM 864 / NBRC 100397 / JF-1)).